We begin with the raw amino-acid sequence, 252 residues long: MNIQLICETENSQNFTALCKEKGLTHDPASVLALVQTETDGEVRLELRKLDEPKLGAVYVDFVAGTMAHRRKFGGGRGEAIAKAVGVKGNELPSVIDATAGLGRDAFVLASIGCRVRLVERHPVVYLLLQDGLRRAYADPEIGEMMQKNMQLLPVHHITELNPFEDFADVVYLDPMYPHKQKSALVKKEMRVFQYLVGADSDSNLLLEPALKLAKKRVVVKRPDYAEFLAEKAPQFSRETKNHRFDIYSVNV.

S-adenosyl-L-methionine contacts are provided by residues R104 to D105, E120 to R121, and D174.

It belongs to the methyltransferase superfamily. RsmJ family.

Its subcellular location is the cytoplasm. It carries out the reaction guanosine(1516) in 16S rRNA + S-adenosyl-L-methionine = N(2)-methylguanosine(1516) in 16S rRNA + S-adenosyl-L-homocysteine + H(+). Functionally, specifically methylates the guanosine in position 1516 of 16S rRNA. This is Ribosomal RNA small subunit methyltransferase J from Mannheimia succiniciproducens (strain KCTC 0769BP / MBEL55E).